Reading from the N-terminus, the 547-residue chain is MAAKDVKFGNDARVKMLRGVNVLADAVKVTLGPKGRNVVLDKSFGAPAITKDGVSVAREIELEDKFENMGAQMVKEVASKANDAAGDGTTTATVLAQAIITEGLKAVAAGMNPMDLKRGIDKAVIAAVEELKTLSVPCSDSKAIAQVGTISANSDETVGKLIAEAMDKVGKEGVITVEDGTGLEDELDVVEGMQFDRGYLSPYFINKPETGAVELESPFILLADKKISNIREMLPVLEAVAKAGKPLLIIAEDVEGEALATLVVNTMRGIVKVAAVKAPGFGDRRKAMLQDIATLTGGTVISEEIGMELEKATLEDMGQAKRVIINKDTTTIIDGVGEEAAIQGRVGQIRKQIEEATSDYDREKLQERVAKLAGGVAVIKVGAATEVEMKEKKARVDDALHATRAAVEEGVVAGGGVALIRVASKLSELRGQNEDQNVGIKVALRAMEAPLRQIVLNCGEEPSVVANTVKAGDGNYGYNAATEEYGNMIDMGILDPTKVTRSALQYAASVAGLMITTECMITDVPKGDGPDLGAGGMGGMGGMGGMM.

Residues 30–33, lysine 51, 87–91, glycine 415, 479–481, and aspartate 495 each bind ATP; these read TLGP, DGTTT, and NAA.

It belongs to the chaperonin (HSP60) family. As to quaternary structure, forms a cylinder of 14 subunits composed of two heptameric rings stacked back-to-back. Interacts with the co-chaperonin GroES.

The protein resides in the cytoplasm. The enzyme catalyses ATP + H2O + a folded polypeptide = ADP + phosphate + an unfolded polypeptide.. Its function is as follows. Together with its co-chaperonin GroES, plays an essential role in assisting protein folding. The GroEL-GroES system forms a nano-cage that allows encapsulation of the non-native substrate proteins and provides a physical environment optimized to promote and accelerate protein folding. This Enterobacter sp. (strain 638) protein is Chaperonin GroEL.